We begin with the raw amino-acid sequence, 343 residues long: Small ribosomal subunit biogenesis GTPase RsgA (343 aa).

The CP-type G domain occupies 116-275; sequence RGQLKPVAAN…LIDSPGIREF (160 aa). GTP contacts are provided by residues 163–166 and 217–225; these read NKAD and GQSGVGKSS. Zn(2+)-binding residues include Cys-299, Cys-304, His-306, and Cys-312.

This sequence belongs to the TRAFAC class YlqF/YawG GTPase family. RsgA subfamily. In terms of assembly, monomer. Associates with 30S ribosomal subunit, binds 16S rRNA. It depends on Zn(2+) as a cofactor.

Its subcellular location is the cytoplasm. One of several proteins that assist in the late maturation steps of the functional core of the 30S ribosomal subunit. Helps release RbfA from mature subunits. May play a role in the assembly of ribosomal proteins into the subunit. Circularly permuted GTPase that catalyzes slow GTP hydrolysis, GTPase activity is stimulated by the 30S ribosomal subunit. The polypeptide is Small ribosomal subunit biogenesis GTPase RsgA (Pseudomonas syringae pv. tomato (strain ATCC BAA-871 / DC3000)).